Reading from the N-terminus, the 104-residue chain is N(4)-acetylcytidine amidohydrolase (104 aa).

Residues 7-104 (TFFTRFEQDI…FWVIAFELVD (98 aa)) form the ASCH domain. Lysine 21 (proton acceptor) is an active-site residue. Residue threonine 24 is the Nucleophile of the active site. Glutamate 74 serves as the catalytic Proton donor.

This sequence belongs to the N(4)-acetylcytidine amidohydrolase family.

It catalyses the reaction N(4)-acetylcytidine + H2O = cytidine + acetate + H(+). It carries out the reaction N(4)-acetyl-2'-deoxycytidine + H2O = 2'-deoxycytidine + acetate + H(+). The catalysed reaction is N(4)-acetylcytosine + H2O = cytosine + acetate + H(+). Its function is as follows. Catalyzes the hydrolysis of N(4)-acetylcytidine (ac4C). The chain is N(4)-acetylcytidine amidohydrolase from Pasteurella multocida (strain Pm70).